The following is a 432-amino-acid chain: D-amino acid dehydrogenase (432 aa).

3 to 17 (VVILGSGVVGVTSAW) provides a ligand contact to FAD.

It belongs to the DadA oxidoreductase family. The cofactor is FAD.

It carries out the reaction a D-alpha-amino acid + A + H2O = a 2-oxocarboxylate + AH2 + NH4(+). The protein operates within amino-acid degradation; D-alanine degradation; NH(3) and pyruvate from D-alanine: step 1/1. Its function is as follows. Oxidative deamination of D-amino acids. The chain is D-amino acid dehydrogenase from Salmonella choleraesuis (strain SC-B67).